Here is a 155-residue protein sequence, read N- to C-terminus: U4/U6.U5 small nuclear ribonucleoprotein 27 kDa protein (155 aa).

Basic residues-rich tracts occupy residues 1–31 (MGRS…RERS) and 39–59 (RRSR…RHRS). The segment at 1–97 (MGRSRSRSPR…ITEEDLEGKT (97 aa)) is disordered. Serine 61 and serine 65 each carry phosphoserine. Residues 66–97 (RLKERRDEEKKETKETKSKERQITEEDLEGKT) are compositionally biased toward basic and acidic residues. 3 positions are modified to phosphoserine: serine 111, serine 114, and serine 132.

The protein belongs to the SNUT3 family. In terms of assembly, part of a tri-snRNP complex. Phosphorylated in vitro by snRNP-associated protein kinase.

It is found in the nucleus. May play a role in mRNA splicing. This chain is U4/U6.U5 small nuclear ribonucleoprotein 27 kDa protein (SNRNP27), found in Homo sapiens (Human).